The chain runs to 251 residues: Imidazole glycerol phosphate synthase subunit HisF (251 aa).

Residues Asp12 and Asp131 contribute to the active site.

The protein belongs to the HisA/HisF family. As to quaternary structure, heterodimer of HisH and HisF.

The protein resides in the cytoplasm. The catalysed reaction is 5-[(5-phospho-1-deoxy-D-ribulos-1-ylimino)methylamino]-1-(5-phospho-beta-D-ribosyl)imidazole-4-carboxamide + L-glutamine = D-erythro-1-(imidazol-4-yl)glycerol 3-phosphate + 5-amino-1-(5-phospho-beta-D-ribosyl)imidazole-4-carboxamide + L-glutamate + H(+). The protein operates within amino-acid biosynthesis; L-histidine biosynthesis; L-histidine from 5-phospho-alpha-D-ribose 1-diphosphate: step 5/9. Functionally, IGPS catalyzes the conversion of PRFAR and glutamine to IGP, AICAR and glutamate. The HisF subunit catalyzes the cyclization activity that produces IGP and AICAR from PRFAR using the ammonia provided by the HisH subunit. The chain is Imidazole glycerol phosphate synthase subunit HisF from Streptomyces griseus subsp. griseus (strain JCM 4626 / CBS 651.72 / NBRC 13350 / KCC S-0626 / ISP 5235).